The chain runs to 238 residues: Ribosomal RNA small subunit methyltransferase G (238 aa).

S-adenosyl-L-methionine is bound by residues Gly-79, Phe-84, 102–104 (EAT), 130–131 (IE), and Arg-149.

This sequence belongs to the methyltransferase superfamily. RNA methyltransferase RsmG family.

The protein resides in the cytoplasm. Its function is as follows. Specifically methylates the N7 position of a guanine in 16S rRNA. In Chloroflexus aggregans (strain MD-66 / DSM 9485), this protein is Ribosomal RNA small subunit methyltransferase G.